A 217-amino-acid chain; its full sequence is Adenylate kinase (217 aa).

G10–T15 is a binding site for ATP. Positions S30–V59 are NMP. Residues T31, R36, A57–V59, G85–R88, and Q92 each bind AMP. The segment at G126–D163 is LID. R127 is an ATP binding site. Residues C130, C133, C150, and C153 each coordinate Zn(2+). Positions 160 and 171 each coordinate AMP. E199 contributes to the ATP binding site.

Belongs to the adenylate kinase family. In terms of assembly, monomer.

Its subcellular location is the cytoplasm. The enzyme catalyses AMP + ATP = 2 ADP. Its pathway is purine metabolism; AMP biosynthesis via salvage pathway; AMP from ADP: step 1/1. Its function is as follows. Catalyzes the reversible transfer of the terminal phosphate group between ATP and AMP. Plays an important role in cellular energy homeostasis and in adenine nucleotide metabolism. This Geobacter sulfurreducens (strain ATCC 51573 / DSM 12127 / PCA) protein is Adenylate kinase.